A 131-amino-acid chain; its full sequence is POU domain, class 3, transcription factor 3 (131 aa).

Residues 1-60 (FTQRRMKLGFTQADVGLALGTLYGNVFSQTTICRFEALQLSFKNMCKLKPLLNKWLEEAD) enclose the POU-specific domain. The segment at residues 78–131 (KRKKRTSIEVSVKGALESHFLKCPKPSAQEITNLADSLQLEKEVVRVWFCNNLQ) is a DNA-binding region (homeobox).

It belongs to the POU transcription factor family. Class-3 subfamily. In terms of assembly, homodimer. In terms of tissue distribution, brain.

Its subcellular location is the nucleus. Its function is as follows. Transcription factor that acts synergistically with SOX11 and SOX4. Plays a role in neuronal development. Is implicated in an enhancer activity at the embryonic met-mesencephalic junction; the enhancer element contains the octamer motif (5'-ATTTGCAT-3'). This is POU domain, class 3, transcription factor 3 (POU3F3) from Sus scrofa (Pig).